The following is a 219-amino-acid chain: Protein matrimony (219 aa).

The span at 74–99 (PPAKAHPHPHQHQHHHHHHKHIHRTQ) shows a compositional bias: basic residues. The interval 74–104 (PPAKAHPHPHQHQHHHHHHKHIHRTQLKPPP) is disordered. The 61-residue stretch at 159 to 219 (NHAANVEQIL…NRIMDVLQTL (61 aa)) folds into the SAM domain.

Interacts with polo. Interacts with cort. Post-translationally, probably ubiquitinated: degraded during the oocyte-to-embryo transition by the anaphase promoting complex/cyclosome (APC/C) containing cort protein.

It localises to the nucleus. The protein localises to the chromosome. In terms of biological role, polo kinase inhibitor required to maintain G2 arrest in the meiotic cell cycle in females. Holds heterochromatically paired homologs together from the end of pachytene until metaphase I. Haploinsufficient locus for homologous achiasmate segregation and may be required for the maintenance of heterochromatic pairings. This Drosophila yakuba (Fruit fly) protein is Protein matrimony (mtrm).